The following is a 512-amino-acid chain: Probable malate:quinone oxidoreductase (512 aa).

The protein belongs to the MQO family. Requires FAD as cofactor.

It carries out the reaction (S)-malate + a quinone = a quinol + oxaloacetate. It participates in carbohydrate metabolism; tricarboxylic acid cycle; oxaloacetate from (S)-malate (quinone route): step 1/1. The chain is Probable malate:quinone oxidoreductase from Rhodococcus erythropolis (strain PR4 / NBRC 100887).